Consider the following 10061-residue polypeptide: MATH and LRR domain-containing protein PFE0570w (10061 aa).

Disordered stretches follow at residues 166–210 (DMDN…EKKN), 244–471 (NNSD…NDIN), and 1004–1170 (DDQK…DTSF). The segment covering 169–179 (NNPNNHVSNNG) has biased composition (polar residues). The span at 193–205 (TSNSIHKNNNTNI) shows a compositional bias: low complexity. Basic and acidic residues predominate over residues 270 to 282 (KKSDNNNDKKNDD). Over residues 285–320 (NNNNNNNNNNNNNNNNNDNHVCTSNNQPNTINKQNN) the composition is skewed to low complexity. Residues 328–338 (DQNGRTKITPQ) are compositionally biased toward polar residues. The stretch at 338-366 (QNVNQKEKEIKNVVKEKNNFNREEKDITN) forms a coiled coil. The segment covering 342 to 365 (QKEKEIKNVVKEKNNFNREEKDIT) has biased composition (basic and acidic residues). Positions 366 to 375 (NSDDYDENST) are enriched in acidic residues. Composition is skewed to polar residues over residues 376–389 (DESCSYNPNITSSE) and 421–437 (VPSNDNASSLNVKSAEN). Residues 431-469 (NVKSAENCNKEKKKKKKKKKKELNNDNKDNTLNNETMND) are a coiled coil. The span at 441–451 (EKKKKKKKKKK) shows a compositional bias: basic residues. A compositionally biased stretch (low complexity) spans 460-471 (NTLNNETMNDIN). Residues 1025 to 1037 (NEEKPNVNKEGNI) show a composition bias toward basic and acidic residues. The span at 1047–1057 (NKNKNNNNNNN) shows a compositional bias: low complexity. The segment covering 1058–1132 (DKNDKNDKND…KKKKNGKEQN (75 aa)) has biased composition (basic and acidic residues). Positions 1133 to 1165 (EDSTESDDESSVIDDNYIDDDSCDCDSESDSID) are enriched in acidic residues. An MATH domain is found at 1328-1458 (NGKIELYIPN…SGGLLIKGKV (131 aa)). The tract at residues 1651–1698 (GGNLQNEQKGDEDVKKEDVKKENVNKEEIKNGNNNNNNDENENEVDDN) is disordered. Basic and acidic residues predominate over residues 1658–1680 (QKGDEDVKKEDVKKENVNKEEIK). Positions 1916–1948 (NYLSNLNKVKININDLNNNIVDVNNSIHNIEKE) form a coiled coil. Basic and acidic residues predominate over residues 1973–1995 (HKETSSIQNKGKEKSNNNIKSDD). 4 disordered regions span residues 1973 to 1998 (HKETSSIQNKGKEKSNNNIKSDDNNN), 2155 to 2245 (LNKS…PSYK), 2427 to 2566 (YSDD…NNIK), and 3120 to 3139 (SNETNDTNHTNRTNRTNEMK). Residues 2216 to 2228 (NNDDKDDDDDDSY) are compositionally biased toward acidic residues. Basic and acidic residues predominate over residues 2235–2245 (SDGKKNDPSYK). The span at 2475 to 2484 (NNNNNNNNMM) shows a compositional bias: low complexity. Basic and acidic residues-rich tracts occupy residues 2487 to 2496 (DDNKVNKNEE) and 2505 to 2527 (QIKEGKEKKLRDFIQKEDIRNED). 2 stretches are compositionally biased toward low complexity: residues 2552–2564 (NNNNNNNNNNNNN) and 3121–3133 (NETNDTNHTNRTN). Residues 2555-2580 (NNNNNNNNNNIKRLDDSYNKLLKNKN) adopt a coiled-coil conformation. A helical membrane pass occupies residues 3398-3418 (KLILKKIFMYLNIICMIIKYI). Disordered stretches follow at residues 3802–3826 (STNDEENVDRSDDSESNDDKKYSKK), 3847–3890 (LTSG…DNNN), and 3919–3953 (ESNDKSYKNQNIQSNEQSVTPNRNIEENKDHEKKS). The segment covering 3809–3822 (VDRSDDSESNDDKK) has biased composition (basic and acidic residues). A compositionally biased stretch (low complexity) spans 3851 to 3890 (NSSSKNSKKNSNNESIQMDNTNNSNSNNNNKNDNNNDNNN). Residues 3926–3941 (KNQNIQSNEQSVTPNR) are compositionally biased toward polar residues. Residues 3942–3953 (NIEENKDHEKKS) are compositionally biased toward basic and acidic residues. Residues 3977 to 4001 (EHLGNATAVLNILQKKLENEELKKL) are a coiled coil. A compositionally biased stretch (basic and acidic residues) spans 4039–4065 (VSAHKEKNVKTDSSDDKKKKEDNENNN). Disordered regions lie at residues 4039–4074 (VSAHKEKNVKTDSSDDKKKKEDNENNNKNKNNIIHN), 4155–4180 (KGNNSKDNNNNNNNNNNNNNNKNNMG), 4352–4414 (SNNN…NNNN), 4919–4943 (NKRKQQIDSSNNNNNVVVNNDDNDN), 4991–5030 (DGLNADSSNLGPYNMNNVKNKNNNNNNSNNKRKKNEKNEK), and 5179–5207 (SKIASTNGNNNNNNNNNNNNNNNNSKSNL). Over residues 4157-4178 (NNSKDNNNNNNNNNNNNNNKNN) the composition is skewed to low complexity. A coiled-coil region spans residues 4399–4424 (NNNNNNNNNNNNNNNNVNKEIIKLNS). Low complexity-rich tracts occupy residues 4929-4943 (NNNNNVVVNNDDNDN), 5004-5019 (NMNNVKNKNNNNNNSN), and 5185-5202 (NGNNNNNNNNNNNNNNNN). The stretch at 5006–5046 (NNVKNKNNNNNNSNNKRKKNEKNEKIDKIEQFLHESELEKD) forms a coiled coil. Coiled-coil stretches lie at residues 5486-5563 (NNNN…NIYE), 5728-5810 (DVLK…DKEE), and 5900-6022 (MNND…INNY). Composition is skewed to basic and acidic residues over residues 5716 to 5732 (KDAKKDSKKIPVDVLKD), 5738 to 5811 (SNKE…KEEP), and 5909 to 5953 (NKNK…KKDN). Disordered stretches follow at residues 5716–5816 (KDAK…QINE), 5892–6009 (EIIN…KKLK), 6123–6142 (KSETEASNKNVESNDNVDGK), 6299–6338 (NDSINMPLPDSPTTTSNSNNNNNNNNSNNNNNNNNYDKGE), 6722–6760 (NMNNNNNNNNNNNNNNNNNNNNNNNNNNNNNNNNNNNNI), 7585–7730 (EDML…VEEK), and 7744–7787 (DLLS…KKSS). Residues 5954–5968 (NNSNNNNNNNNLSNN) are compositionally biased toward low complexity. The span at 5969–5978 (GEEDPNDSDS) shows a compositional bias: acidic residues. Over residues 5991–6003 (NKNINDDSDDNNK) the composition is skewed to basic and acidic residues. The span at 6129–6138 (SNKNVESNDN) shows a compositional bias: polar residues. Low complexity-rich tracts occupy residues 6314–6333 (SNSNNNNNNNNSNNNNNNNN) and 6722–6759 (NMNNNNNNNNNNNNNNNNNNNNNNNNNNNNNNNNNNNN). The stretch at 6719–6743 (NMNNMNNNNNNNNNNNNNNNNNNNN) forms a coiled coil. The span at 7585 to 7599 (EDMLHSKKTDVIQHG) shows a compositional bias: basic and acidic residues. A compositionally biased stretch (acidic residues) spans 7600–7685 (DEEEDDEEDD…EHINEEEQED (86 aa)). Coiled coils occupy residues 7601–7637 (EEEDDEEDDEEDDEEDEEEEEEDEDEEDVEDVEDIED), 7710–7813 (NTKI…NKNE), 7934–7961 (KTDEQKIKEEIKQTQDEEDTYLDLIDNE), and 8217–8241 (NINNKEKETNKNEEQQQGEAEGKRE). A compositionally biased stretch (basic residues) spans 7749 to 7765 (SKKKNHKDKRNASKNKN). Basic and acidic residues predominate over residues 7766-7786 (KNKDILKKNENNINDEKEKKS). Disordered stretches follow at residues 8189–8252 (ETGG…GGEE), 8293–8380 (GKVS…IIMS), and 8474–8497 (KKKNYSNNNIYNNNSSNKVSMDEE). Residues 8218–8242 (INNKEKETNKNEEQQQGEAEGKREG) are compositionally biased toward basic and acidic residues. Over residues 8243-8252 (EGEEGEGGEE) the composition is skewed to acidic residues. Over residues 8305–8314 (LLNDKEHEKD) the composition is skewed to basic and acidic residues. Residues 8315 to 8363 (NEDNDEDNDEDDDDEDDDEDDEDDDDDDDDDDDDDDDDDYDEDYDEDYD) are compositionally biased toward acidic residues. Positions 8364-8374 (EKLVENKKNER) are enriched in basic and acidic residues. The segment covering 8478–8492 (YSNNNIYNNNSSNKV) has biased composition (low complexity). Coiled-coil stretches lie at residues 8644–8697 (SETL…ELNN), 8882–8907 (QYLEKENTYNNLYKKIKDEKRIVDNY), and 9219–9247 (IDMKKKIEQEEDKKKIINNNNNNINSNNN). Disordered regions lie at residues 9759-9779 (TIPRHNTTTTNNNNNDNNNNS), 9891-9926 (SNTSGNMKNSSNIRSSSNIRSSNNIKSSSNIKSSSN), and 9985-10061 (KNNS…NNIY). Composition is skewed to low complexity over residues 9764–9779 (NTTTTNNNNNDNNNNS), 9899–9926 (NSSNIRSSSNIRSSNNIKSSSNIKSSSN), and 9986–10022 (NNSITNETHNNNDNMKTNHNNNNNNNNNNNNNNNNNT). A compositionally biased stretch (polar residues) spans 10031-10041 (IFQQNQNHSDT). The span at 10042–10061 (NNNNNNNNKNNSNNNNNNIY) shows a compositional bias: low complexity.

It is found in the membrane. This is MATH and LRR domain-containing protein PFE0570w from Plasmodium falciparum (isolate 3D7).